A 444-amino-acid chain; its full sequence is MREIVLTQIGQCGNQIGAKFWEVISDEHAIDSAGTYHGDSHLQLERINVYYNEASGGRYVPRAVLVDLEPGTMDSVRSGPFGQVFRPDNFIFGQCGAGNNWAKGHYTEGAELMESVMDVVRKEAESCDCLQGFQLTHSLGGGTGSGMGTLLLSKIREEYPDRIINTFSILPSPKVSDTVVEPYNATLSVHQLIENADETFCIDNEALYDICSKTLKLPTPTYGDLNHLVSATMSGVTTCLRFPGQLNADLRKLAVNMVPFPRLHFFMPGFAPLTSRGSQQYRALTVAELTQQMFDAKNMMAACDPRHGRYLTAAAIFRGRMPMREVDEQMFNIQDKNSSYFADWLPNNVKTAVCDIPPRGLKMSATFIGNNTAIQELFKRVSEQFTAMFRRKAFLHWYTGEGMDEMEFTEAESNMNDLVSEYQQYQDATAEEEEDEEYAEEEVA.

The MREI motif signature appears at 1–4; that stretch reads MREI. Residues glutamine 11, glutamate 69, serine 138, glycine 142, threonine 143, and glycine 144 each contribute to the GTP site. Residue glutamate 69 coordinates Mg(2+). Serine 172 bears the Phosphoserine; by CDK1 mark. Residues asparagine 204 and asparagine 226 each contribute to the GTP site. Positions 423 to 444 are disordered; it reads QQYQDATAEEEEDEEYAEEEVA. Residues 429-444 show a composition bias toward acidic residues; it reads TAEEEEDEEYAEEEVA. Glutamate 436 is subject to 5-glutamyl polyglutamate.

This sequence belongs to the tubulin family. As to quaternary structure, dimer of alpha and beta chains. A typical microtubule is a hollow water-filled tube with an outer diameter of 25 nm and an inner diameter of 15 nM. Alpha-beta heterodimers associate head-to-tail to form protofilaments running lengthwise along the microtubule wall with the beta-tubulin subunit facing the microtubule plus end conferring a structural polarity. Microtubules usually have 13 protofilaments but different protofilament numbers can be found in some organisms and specialized cells. Mg(2+) is required as a cofactor. Post-translationally, some glutamate residues at the C-terminus are polyglutamylated, resulting in polyglutamate chains on the gamma-carboxyl group. Polyglutamylation plays a key role in microtubule severing by spastin (SPAST). SPAST preferentially recognizes and acts on microtubules decorated with short polyglutamate tails: severing activity by SPAST increases as the number of glutamates per tubulin rises from one to eight, but decreases beyond this glutamylation threshold. Glutamylation is also involved in cilia motility. Some glutamate residues at the C-terminus are monoglycylated but not polyglycylated due to the absence of functional TTLL10 in human. Monoglycylation is mainly limited to tubulin incorporated into cilia and flagella axonemes, which is required for their stability and maintenance. Flagella glycylation controls sperm motility. Both polyglutamylation and monoglycylation can coexist on the same protein on adjacent residues, and lowering glycylation levels increases polyglutamylation, and reciprocally. In terms of processing, phosphorylated on Ser-172 by CDK1 during the cell cycle, from metaphase to telophase, but not in interphase. This phosphorylation inhibits tubulin incorporation into microtubules. In terms of tissue distribution, expressed at a high level in oocytes, at different stages of development.

Its subcellular location is the cytoplasm. It localises to the cytoskeleton. The protein localises to the spindle. Functionally, tubulin is the major constituent of microtubules, a cylinder consisting of laterally associated linear protofilaments composed of alpha- and beta-tubulin heterodimers. Microtubules grow by the addition of GTP-tubulin dimers to the microtubule end, where a stabilizing cap forms. Below the cap, tubulin dimers are in GDP-bound state, owing to GTPase activity of alpha-tubulin. TUBB8 has a key role in meiotic spindle assembly and oocyte maturation. In Homo sapiens (Human), this protein is Tubulin beta-8 chain.